Here is a 463-residue protein sequence, read N- to C-terminus: Movement protein TGB1 (463 aa).

The interval 1–126 is disordered; that stretch reads MESGFNGSRP…RIPEEGGGGL (126 aa). 2 nucleolar localization signal regions span residues 11 to 16 and 37 to 52; these read HRVKKD and FRKN…KPRS. Over residues 23 to 49 the composition is skewed to polar residues; sequence PVNTQGSSGTTGNAFRKNNNNKTQNWK. Positions 58–67 are enriched in basic and acidic residues; sequence NEGDQTKNNK. Positions 83-95 are enriched in polar residues; it reads RPESSTGESVKQQ. Positions 96–107 are enriched in basic and acidic residues; sequence SEPHRVLEDKKQ. Residues 185 to 326 form the (+)RNA virus helicase ATP-binding domain; that stretch reads CNLSQRESEV…WLQVPVIFQS (142 aa). 215–222 lines the ATP pocket; the sequence is GVPGSGKT. The (+)RNA virus helicase C-terminal domain occupies 327–463; that stretch reads LTSRRFGKAT…QPQTDRYGPE (137 aa).

It belongs to the virgaviridae/benyvirus TGB1 movement protein family. Homooligomer. TGB1-TGB3-TGB2 complex formation is enhanced by ATP hydrolysis. Interacts with the suppressor of RNA silencing (via N-terminus). Interacts (via N-terminus) with host importin IMPA1. Mg(2+) serves as cofactor.

It is found in the host cell junction. Its subcellular location is the host plasmodesma. It localises to the host nucleus. The protein localises to the host cytoplasm. The protein resides in the host nucleolus. It is found in the host cytoskeleton. It carries out the reaction ATP + H2O = ADP + phosphate + H(+). Its function is as follows. Participates in the transport of viral genome to neighboring plant cells directly through plasmodesmata, without any budding. Multifunctional movement protein with RNA-binding, ATPase and helicase activities. Engages in homologous interactions leading to the formation of a ribonucleoprotein complex containing plus-sense viral RNAs (vRNPs). ATPase activity is probably required for vRNPs movement complex assembly. Intracellular delivery of TGBp1-containing vRNPs to plasmodesmata is facilitated by TGBp2 and TGBp3. The chain is Movement protein TGB1 from Potato mop-top virus (isolate Potato/Sweden/Sw) (PMTV).